A 463-amino-acid polypeptide reads, in one-letter code: Flotillin-like protein 2 (463 aa).

Cys35 is lipidated: S-palmitoyl cysteine. Residues Glu305–Glu354 are a coiled coil.

Belongs to the band 7/mec-2 family. Flotillin subfamily. In terms of processing, may be palmitoylated.

The protein localises to the cell membrane. Its subcellular location is the membrane. It is found in the caveola. In terms of biological role, may act as a scaffolding protein within caveolar membranes, functionally participating in formation of caveolae or caveolae-like vesicles. In Arabidopsis thaliana (Mouse-ear cress), this protein is Flotillin-like protein 2 (FLOT2).